The primary structure comprises 294 residues: UDP-3-O-acyl-N-acetylglucosamine deacetylase (294 aa).

Residues His75, His232, and Asp236 each contribute to the Zn(2+) site. The active-site Proton donor is His259.

The protein belongs to the LpxC family. Zn(2+) serves as cofactor.

The enzyme catalyses a UDP-3-O-[(3R)-3-hydroxyacyl]-N-acetyl-alpha-D-glucosamine + H2O = a UDP-3-O-[(3R)-3-hydroxyacyl]-alpha-D-glucosamine + acetate. The protein operates within glycolipid biosynthesis; lipid IV(A) biosynthesis; lipid IV(A) from (3R)-3-hydroxytetradecanoyl-[acyl-carrier-protein] and UDP-N-acetyl-alpha-D-glucosamine: step 2/6. Functionally, catalyzes the hydrolysis of UDP-3-O-myristoyl-N-acetylglucosamine to form UDP-3-O-myristoylglucosamine and acetate, the committed step in lipid A biosynthesis. The chain is UDP-3-O-acyl-N-acetylglucosamine deacetylase from Campylobacter concisus (strain 13826).